Consider the following 438-residue polypeptide: Proline--tRNA ligase (438 aa).

Belongs to the class-II aminoacyl-tRNA synthetase family. ProS type 2 subfamily. In terms of assembly, homodimer.

Its subcellular location is the cytoplasm. It carries out the reaction tRNA(Pro) + L-proline + ATP = L-prolyl-tRNA(Pro) + AMP + diphosphate. Its function is as follows. Catalyzes the attachment of proline to tRNA(Pro) in a two-step reaction: proline is first activated by ATP to form Pro-AMP and then transferred to the acceptor end of tRNA(Pro). The chain is Proline--tRNA ligase from Rickettsia canadensis (strain McKiel).